A 1164-amino-acid polypeptide reads, in one-letter code: WASH complex subunit 5 (1164 aa).

The protein belongs to the strumpellin family. Probable component of the WASH complex.

The polypeptide is WASH complex subunit 5 (Dictyostelium discoideum (Social amoeba)).